Reading from the N-terminus, the 902-residue chain is Proline-rich transmembrane protein 4 (902 aa).

Positions 1–18 (MAGRGCLELGLFCWVLLA) are cleaved as a signal peptide. Disordered stretches follow at residues 120–149 (FTPW…SQPR) and 262–337 (PPPL…SGQP). A compositionally biased stretch (low complexity) spans 125–139 (SSLPPESTSPLSGPT). The span at 271-301 (SSPSPLDSVASPSSASIKTTPVQHDPTVSTS) shows a compositional bias: polar residues. 5 helical membrane-spanning segments follow: residues 371–391 (AGAL…LLPW), 393–413 (CPPG…AGTT), 431–451 (ALAW…GLGL), 465–485 (PIGL…AALG), and 501–521 (GLHA…SCWG). At serine 642 the chain carries Phosphoserine. Disordered stretches follow at residues 700-721 (GARA…TVDF), 771-811 (KTGA…SLCG), and 836-872 (VLSP…ASEL). Polar residues predominate over residues 703 to 717 (ANTTQSPASSPSSDC). The segment covering 786 to 798 (SPAPPELPSPGAW) has biased composition (pro residues). 2 stretches are compositionally biased toward low complexity: residues 799-811 (PPGS…SLCG) and 843-854 (SESSPSLPASGS).

It is found in the membrane. The polypeptide is Proline-rich transmembrane protein 4 (Prrt4) (Rattus norvegicus (Rat)).